Consider the following 89-residue polypeptide: MSLDTTEKQQLINTHQTHGTDTGSAEVQVAMLSERINRLSGHLQNNIHDFSSRQGLLKMIGRRKRLLNYMRSKSEQRYSETISKLGIRG.

Residues 1-25 (MSLDTTEKQQLINTHQTHGTDTGSA) are disordered. Positions 8-25 (KQQLINTHQTHGTDTGSA) are enriched in polar residues.

Belongs to the universal ribosomal protein uS15 family. In terms of assembly, part of the 30S ribosomal subunit. Forms a bridge to the 50S subunit in the 70S ribosome, contacting the 23S rRNA.

In terms of biological role, one of the primary rRNA binding proteins, it binds directly to 16S rRNA where it helps nucleate assembly of the platform of the 30S subunit by binding and bridging several RNA helices of the 16S rRNA. Forms an intersubunit bridge (bridge B4) with the 23S rRNA of the 50S subunit in the ribosome. This is Small ribosomal subunit protein uS15 from Synechococcus sp. (strain CC9902).